The primary structure comprises 2586 residues: Highly reducing polyketide synthase FUM1 (2586 aa).

The Ketosynthase family 3 (KS3) domain occupies 29 to 451 (VLPVAIVGMG…GANAHCIIET (423 aa)). Catalysis depends on for beta-ketoacyl synthase activity residues cysteine 201, histidine 336, and histidine 374. Residues 609-928 (IFTGQGAQWV…TESLLKLAGE (320 aa)) are malonyl-CoA:ACP transacylase (MAT) domain. Residues 980–1111 (HELLGSRTLE…GQVRPGQDAH (132 aa)) form an N-terminal hotdog fold region. Residues 980–1269 (HELLGSRTLE…LEDGKFSPLE (290 aa)) are dehydratase (DH) domain. One can recognise a PKS/mFAS DH domain in the interval 980-1274 (HELLGSRTLE…FSPLEMDLAE (295 aa)). Histidine 1012 (proton acceptor; for dehydratase activity) is an active-site residue. Positions 1125-1274 (QHYPRLVDNL…FSPLEMDLAE (150 aa)) are C-terminal hotdog fold. Catalysis depends on aspartate 1186, which acts as the Proton donor; for dehydratase activity. The tract at residues 1450-1627 (DFFATAGHTR…GFSGVDSAIY (178 aa)) is methyltransferase (CMet) domain. The tract at residues 1862-2172 (GLLQTLGWVP…KGVHLGKIVV (311 aa)) is enoyl reductase (ER) (ER) domain. The tract at residues 2197–2373 (ASYLLVGGLG…ASVLQIGLIE (177 aa)) is ketoreductase (KR) domain. Positions 2486-2565 (PATVELVTNE…GLARLTVDGL (80 aa)) constitute a Carrier domain. Serine 2524 carries the post-translational modification O-(pantetheine 4'-phosphoryl)serine.

It participates in mycotoxin biosynthesis. In terms of biological role, highly reducing polyketide synthase; part of the gene cluster that mediates the biosynthesis of fumonisins B1 (FB1), B2 (FB2), B3 (FB3), and B4 (FB4), which are carcinogenic mycotoxins. The biosynthesis starts with the FUM1-catalyzed carbon chain assembly from one molecule of acetyl-CoA, eight molecules of malonyl-CoA, and two molecules of methionine (in S-adenosyl form). The C18 polyketide chain is released from the enzyme by a nucleophilic attack of a carbanion, which is derived from R-carbon of alanine by decarboxylation, on the carbonyl carbon of polyketide acyl chain. This step is catalyzed by the pyridoxal 5'-phosphate-dependent aminoacyl transferase FUM8. The resultant 3-keto intermediate is then stereospecifically reduced to a 3-hydroxyl product by reductase FUM13. Subsequent oxidations at C-10 by the cytochrome P450 monooxygenase FUM2, C-14 and C-15 by FUM6, FUM12 or FUM15, tricarballylic esterification of the hydroxyl groups on C-14 and C-15 by acyltransferase FUM14, and C-5 hydroxylation by 2-keto-glutarate-dependent dioxygenase FUM3 furnish the biosynthesis of fumonisins. The tricarballylic moieties are most likely derived from the citric acid cycle, and their addition to the carbon backbone may involve FUM7, FUM10, FUM11 and FUM14. This Gibberella moniliformis (strain M3125 / FGSC 7600) (Maize ear and stalk rot fungus) protein is Highly reducing polyketide synthase FUM1.